Here is a 226-residue protein sequence, read N- to C-terminus: ATP synthase F(0) complex subunit a (226 aa).

6 helical membrane-spanning segments follow: residues 6–26 (FASFIAPTMMGLPIVTLIIMF), 68–88 (WSLMLMSLIMFIGSTNILGLL), 97–117 (QLSMNLGMAIPLWSATVFTGF), 136–156 (LLIPMLVIIETISLFIQPVAL), 164–184 (ITAGHLLIHLIGGATLALLNI), and 189–209 (AFITFTILILLTILEFAVALI).

It belongs to the ATPase A chain family. In terms of assembly, component of the ATP synthase complex composed at least of ATP5F1A/subunit alpha, ATP5F1B/subunit beta, ATP5MC1/subunit c (homooctomer), MT-ATP6/subunit a, MT-ATP8/subunit 8, ATP5ME/subunit e, ATP5MF/subunit f, ATP5MG/subunit g, ATP5MK/subunit k, ATP5MJ/subunit j, ATP5F1C/subunit gamma, ATP5F1D/subunit delta, ATP5F1E/subunit epsilon, ATP5PF/subunit F6, ATP5PB/subunit b, ATP5PD/subunit d, ATP5PO/subunit OSCP. ATP synthase complex consists of a soluble F(1) head domain (subunits alpha(3) and beta(3)) - the catalytic core - and a membrane F(0) domain - the membrane proton channel (subunits c, a, 8, e, f, g, k and j). These two domains are linked by a central stalk (subunits gamma, delta, and epsilon) rotating inside the F1 region and a stationary peripheral stalk (subunits F6, b, d, and OSCP). Interacts with DNAJC30; interaction is direct.

Its subcellular location is the mitochondrion inner membrane. The catalysed reaction is H(+)(in) = H(+)(out). Functionally, subunit a, of the mitochondrial membrane ATP synthase complex (F(1)F(0) ATP synthase or Complex V) that produces ATP from ADP in the presence of a proton gradient across the membrane which is generated by electron transport complexes of the respiratory chain. ATP synthase complex consist of a soluble F(1) head domain - the catalytic core - and a membrane F(1) domain - the membrane proton channel. These two domains are linked by a central stalk rotating inside the F(1) region and a stationary peripheral stalk. During catalysis, ATP synthesis in the catalytic domain of F(1) is coupled via a rotary mechanism of the central stalk subunits to proton translocation. With the subunit c (ATP5MC1), forms the proton-conducting channel in the F(0) domain, that contains two crucial half-channels (inlet and outlet) that facilitate proton movement from the mitochondrial intermembrane space (IMS) into the matrix. Protons are taken up via the inlet half-channel and released through the outlet half-channel, following a Grotthuss mechanism. In Sus scrofa (Pig), this protein is ATP synthase F(0) complex subunit a.